The following is a 200-amino-acid chain: Glutathione S-transferase 1-1 (200 aa).

In terms of domain architecture, GST N-terminal spans 1–73; it reads GSSPCRSVIM…YLVEKYGKTD (73 aa). Glutathione contacts are provided by residues Ser-2, 43 to 45, and 57 to 59; these read HTI and ESR. Positions 79 to 200 constitute a GST C-terminal domain; it reads CPKKRAVINQ…AGCLEFKKYF (122 aa).

Belongs to the GST superfamily. Theta family. In terms of assembly, homodimer.

It carries out the reaction RX + glutathione = an S-substituted glutathione + a halide anion + H(+). It catalyses the reaction 1,1,1-trichloro-2,2-bis(4-chlorophenyl)ethane = 1,1-dichloro-2,2-bis(4-chlorophenyl)ethylene + chloride + H(+). In terms of biological role, conjugation of reduced glutathione to a wide number of exogenous and endogenous hydrophobic electrophiles. Has DDT dehydrochlorinase activity. This chain is Glutathione S-transferase 1-1 (GstD1), found in Drosophila teissieri (Fruit fly).